Reading from the N-terminus, the 192-residue chain is Thymidine kinase (192 aa).

Residues 9–16 (SSMNAGKS) and 87–90 (DEAQ) contribute to the ATP site. The active-site Proton acceptor is the glutamate 88. 4 residues coordinate Zn(2+): cysteine 145, cysteine 147, cysteine 182, and histidine 185.

Belongs to the thymidine kinase family. As to quaternary structure, homotetramer.

Its subcellular location is the cytoplasm. The enzyme catalyses thymidine + ATP = dTMP + ADP + H(+). The sequence is that of Thymidine kinase from Colwellia psychrerythraea (strain 34H / ATCC BAA-681) (Vibrio psychroerythus).